A 326-amino-acid chain; its full sequence is MLTLARQQQRQNIRWLLCLSVLMLLALLLSLCAGEQWISPGDWFTPRGELFVWQIRLPRTLAVLLVGAALAISGAVMQALFENPLAEPGLLGVSNGAGVGLIAAVLLGQGQLPNWALGLCAIAGALIITLILLRFARRHLSTSRLLLAGVALGIICSALMTWAIYFSTSVDLRQLMYWMMGGFGGVDWRQSWLMLALIPVLLWICCQSRPMNMLALGEISARQLGLPLWFWRNVLVAATGWMVGVSVALAGAIGFIGLVIPHILRLCGLTDHRVLLPGCALAGASALLLADVVARLALAAAELPIGVVTATLGAPVFIWLLLKAGR.

9 helical membrane passes run 15 to 35 (WLLCLSVLMLLALLLSLCAGE), 61 to 81 (LAVLLVGAALAISGAVMQALF), 88 to 108 (PGLLGVSNGAGVGLIAAVLLG), 112 to 132 (LPNWALGLCAIAGALIITLIL), 146 to 166 (LLAGVALGIICSALMTWAIYF), 184 to 204 (GGVDWRQSWLMLALIPVLLWI), 240 to 260 (GWMVGVSVALAGAIGFIGLVI), 274 to 294 (VLLPGCALAGASALLLADVVA), and 302 to 322 (ELPIGVVTATLGAPVFIWLLL).

The protein belongs to the binding-protein-dependent transport system permease family. FecCD subfamily. The complex is composed of two ATP-binding proteins (BtuD), two transmembrane proteins (BtuC) and a solute-binding protein (BtuF).

The protein localises to the cell inner membrane. Part of the ABC transporter complex BtuCDF involved in vitamin B12 import. Involved in the translocation of the substrate across the membrane. In Escherichia coli (strain SE11), this protein is Vitamin B12 import system permease protein BtuC.